A 290-amino-acid chain; its full sequence is MSFMDQIPGGGNYPKLPVECLPNFPIQPSLTFRGRNDSHKLKNFISEIMLNMSMISWPNDASRIVYCRRHLLNPAAQWANDFVQEQGILEITFDTFIQGLYQHFYKPPDINKIFNAITQLSEAKLGIERLNQRFRKIWDRMPPDFMTEKAAIMTYTRLLTKETYNIVRMHKPETLKDAMEEAYQTTALTERFFPGFELDADGDTIIGATTHLQEEYDSDYDSEDNLTQNGYVHTVRTRRSYNKPMSNHRNRRNNNPSREECIKNRLCFYCKKEGHRLNECRARKASSNRS.

Ser-2 is subject to N-acetylserine. The segment at 265-282 (RLCFYCKKEGHRLNECRA) adopts a CCHC-type zinc-finger fold.

The protein resides in the cytoplasm. Its function is as follows. Capsid protein (CA) is the structural component of the virus-like particle (VLP), forming the shell that encapsulates the retrotransposons dimeric RNA genome. Nucleocapsid protein p9 (NC) forms the nucleocore that coats the retro-elements dimeric RNA. Binds these RNAs through its zinc fingers. Promotes primer tRNA(i)-Met annealing to the multipartite primer-binding site (PBS), dimerization of Ty3 RNA and initiation of reverse transcription. The chain is Transposon Ty3-G Gag polyprotein (TY3A-G) from Saccharomyces cerevisiae (strain ATCC 204508 / S288c) (Baker's yeast).